The sequence spans 262 residues: Glutamate racemase (262 aa).

Substrate is bound by residues 7–8 (DS) and 39–40 (YG). Cysteine 70 (proton donor/acceptor) is an active-site residue. 71–72 (NT) contributes to the substrate binding site. Cysteine 182 (proton donor/acceptor) is an active-site residue. Residue 183–184 (TH) participates in substrate binding.

Belongs to the aspartate/glutamate racemases family.

It catalyses the reaction L-glutamate = D-glutamate. Its pathway is cell wall biogenesis; peptidoglycan biosynthesis. Provides the (R)-glutamate required for cell wall biosynthesis. The chain is Glutamate racemase from Campylobacter concisus (strain 13826).